A 603-amino-acid polypeptide reads, in one-letter code: Penicillin-binding protein activator LpoA (603 aa).

The N-terminal stretch at 1–24 (MINHKRLSVPRILTPVALAITLAA) is a signal peptide. C25 carries N-palmitoyl cysteine lipidation. C25 carries S-diacylglycerol cysteine lipidation.

This sequence belongs to the LpoA family. In terms of assembly, interacts with PBP1a.

The protein localises to the cell outer membrane. In terms of biological role, regulator of peptidoglycan synthesis that is essential for the function of penicillin-binding protein 1A (PBP1a). The polypeptide is Penicillin-binding protein activator LpoA (Vibrio antiquarius (strain Ex25)).